Here is a 95-residue protein sequence, read N- to C-terminus: Large ribosomal subunit protein uL23 (95 aa).

Belongs to the universal ribosomal protein uL23 family. In terms of assembly, part of the 50S ribosomal subunit. Contacts protein L29, and trigger factor when it is bound to the ribosome.

One of the early assembly proteins it binds 23S rRNA. One of the proteins that surrounds the polypeptide exit tunnel on the outside of the ribosome. Forms the main docking site for trigger factor binding to the ribosome. This chain is Large ribosomal subunit protein uL23, found in Bacillus licheniformis (strain ATCC 14580 / DSM 13 / JCM 2505 / CCUG 7422 / NBRC 12200 / NCIMB 9375 / NCTC 10341 / NRRL NRS-1264 / Gibson 46).